The chain runs to 184 residues: MAKYNEKELADTSKFLSFVLRHKPEAIGIVLDREGWADIDKLILCAQKAGKRLTRALLDTVVATSDKKRFSYSSDGRCIRAVQGHSTSQVAISFAEKTPPQFLYHGTASRFLDEIKKQGLIAGERHYVHLSADEATARKVGARHGSPVILTVKAQEMAKRGIPFWQAENGVWLTSTVAVEFLEW.

Belongs to the KptA/TPT1 family.

In terms of biological role, removes the 2'-phosphate from RNA via an intermediate in which the phosphate is ADP-ribosylated by NAD followed by a presumed transesterification to release the RNA and generate ADP-ribose 1''-2''-cyclic phosphate (APPR&gt;P). May function as an ADP-ribosylase. The chain is Probable RNA 2'-phosphotransferase from Escherichia coli (strain 55989 / EAEC).